Here is a 212-residue protein sequence, read N- to C-terminus: Thymidylate kinase (212 aa).

Position 11 to 18 (11 to 18 (GPEGAGKT)) interacts with ATP.

It belongs to the thymidylate kinase family.

The catalysed reaction is dTMP + ATP = dTDP + ADP. Functionally, phosphorylation of dTMP to form dTDP in both de novo and salvage pathways of dTTP synthesis. The sequence is that of Thymidylate kinase from Streptococcus pneumoniae (strain Taiwan19F-14).